Here is a 446-residue protein sequence, read N- to C-terminus: Exodeoxyribonuclease 7 large subunit (446 aa).

Belongs to the XseA family. In terms of assembly, heterooligomer composed of large and small subunits.

It is found in the cytoplasm. The enzyme catalyses Exonucleolytic cleavage in either 5'- to 3'- or 3'- to 5'-direction to yield nucleoside 5'-phosphates.. In terms of biological role, bidirectionally degrades single-stranded DNA into large acid-insoluble oligonucleotides, which are then degraded further into small acid-soluble oligonucleotides. This chain is Exodeoxyribonuclease 7 large subunit, found in Streptococcus pneumoniae (strain Hungary19A-6).